Consider the following 89-residue polypeptide: Elongation factor 1-beta (89 aa).

The protein belongs to the EF-1-beta/EF-1-delta family.

Its function is as follows. Promotes the exchange of GDP for GTP in EF-1-alpha/GDP, thus allowing the regeneration of EF-1-alpha/GTP that could then be used to form the ternary complex EF-1-alpha/GTP/AAtRNA. In Methanococcoides burtonii (strain DSM 6242 / NBRC 107633 / OCM 468 / ACE-M), this protein is Elongation factor 1-beta.